The primary structure comprises 423 residues: Type II methyltransferase M.BamHI (423 aa).

The span at 397 to 414 (DFRQDHEGNSKGDKKNEN) shows a compositional bias: basic and acidic residues. The tract at residues 397–423 (DFRQDHEGNSKGDKKNENNDQISLSLE) is disordered.

This sequence belongs to the N(4)/N(6)-methyltransferase family.

It carries out the reaction a 2'-deoxycytidine in DNA + S-adenosyl-L-methionine = an N(4)-methyl-2'-deoxycytidine in DNA + S-adenosyl-L-homocysteine + H(+). Functionally, a beta subtype methylase, recognizes the double-stranded sequence 5'-GGATCC-3', methylates C-5 on both strands, and protects the DNA from cleavage by the BamHI endonuclease. The protein is Type II methyltransferase M.BamHI of Bacillus amyloliquefaciens (Bacillus velezensis).